The chain runs to 102 residues: 10 kDa heat shock protein, mitochondrial (102 aa).

A2 carries the post-translational modification N-acetylalanine. K8 bears the N6-acetyllysine mark. N6-succinyllysine is present on K28. Position 40 is an N6-acetyllysine; alternate (K40). N6-malonyllysine; alternate is present on residues K40, K54, and K56. K40, K54, K56, K66, and K70 each carry N6-succinyllysine; alternate. An N6-acetyllysine; alternate mark is found at K56, K66, and K70. Phosphothreonine is present on T79. Residues K80 and K86 each carry the N6-acetyllysine; alternate modification. N6-succinyllysine; alternate is present on residues K80 and K86. K99 is subject to N6-acetyllysine.

The protein belongs to the GroES chaperonin family. Homoheptamer arranged in a ring structure. 2 heptameric Hsp10 rings interact with a Hsp60 tetradecamer in the structure of a back-to-back double heptameric ring to form the symmetrical football complex.

It localises to the mitochondrion matrix. Its function is as follows. Co-chaperonin implicated in mitochondrial protein import and macromolecular assembly. Together with Hsp60, facilitates the correct folding of imported proteins. May also prevent misfolding and promote the refolding and proper assembly of unfolded polypeptides generated under stress conditions in the mitochondrial matrix. The functional units of these chaperonins consist of heptameric rings of the large subunit Hsp60, which function as a back-to-back double ring. In a cyclic reaction, Hsp60 ring complexes bind one unfolded substrate protein per ring, followed by the binding of ATP and association with 2 heptameric rings of the co-chaperonin Hsp10. This leads to sequestration of the substrate protein in the inner cavity of Hsp60 where, for a certain period of time, it can fold undisturbed by other cell components. Synchronous hydrolysis of ATP in all Hsp60 subunits results in the dissociation of the chaperonin rings and the release of ADP and the folded substrate protein. The polypeptide is 10 kDa heat shock protein, mitochondrial (Hspe1) (Rattus norvegicus (Rat)).